Reading from the N-terminus, the 267-residue chain is Proteasome subunit alpha (267 aa).

The interval 231–267 is disordered; the sequence is ETLLQERDSKESAESEEPKESEEGKKTGKKSDADSSD. Over residues 234–267 the composition is skewed to basic and acidic residues; it reads LQERDSKESAESEEPKESEEGKKTGKKSDADSSD.

Belongs to the peptidase T1A family. The 20S proteasome core is composed of 14 alpha and 14 beta subunits that assemble into four stacked heptameric rings, resulting in a barrel-shaped structure. The two inner rings, each composed of seven catalytic beta subunits, are sandwiched by two outer rings, each composed of seven alpha subunits. The catalytic chamber with the active sites is on the inside of the barrel. Has a gated structure, the ends of the cylinder being occluded by the N-termini of the alpha-subunits. Is capped by the proteasome-associated ATPase, ARC.

It localises to the cytoplasm. It participates in protein degradation; proteasomal Pup-dependent pathway. The formation of the proteasomal ATPase ARC-20S proteasome complex, likely via the docking of the C-termini of ARC into the intersubunit pockets in the alpha-rings, may trigger opening of the gate for substrate entry. Interconversion between the open-gate and close-gate conformations leads to a dynamic regulation of the 20S proteasome proteolysis activity. In terms of biological role, component of the proteasome core, a large protease complex with broad specificity involved in protein degradation. The sequence is that of Proteasome subunit alpha from Mycobacterium marinum (strain ATCC BAA-535 / M).